The following is a 53-amino-acid chain: MAVKRSTRLGCNECSEINYLTFKNVKKNPEKLALNKFCSRCRKVVLHKEVKRK.

The protein belongs to the bacterial ribosomal protein bL33 family.

The protein is Large ribosomal subunit protein bL33A (rpmG1) of Mycoplasma genitalium (strain ATCC 33530 / DSM 19775 / NCTC 10195 / G37) (Mycoplasmoides genitalium).